The primary structure comprises 398 residues: uncharacterized protein (398 aa).

A Radical SAM core domain is found at 21–253 (TNFGPTNLII…WQLTSTSEPE (233 aa)). Residues cysteine 37, cysteine 41, and cysteine 44 each contribute to the [4Fe-4S] cluster site.

It belongs to the radical SAM superfamily. Anaerobic sulfatase-maturating enzyme family. Requires [4Fe-4S] cluster as cofactor.

This is an uncharacterized protein from Synechocystis sp. (strain ATCC 27184 / PCC 6803 / Kazusa).